The chain runs to 270 residues: uncharacterized protein (270 aa).

The signal sequence occupies residues 1–22 (MEYIKKIALYMSVLLLIIFIGG). A lipid anchor (N-palmitoyl cysteine) is attached at Cys-23. The S-diacylglycerol cysteine moiety is linked to residue Cys-23.

It belongs to the staphylococcal tandem lipoprotein family.

It localises to the cell membrane. This is an uncharacterized protein from Staphylococcus aureus (strain MW2).